The sequence spans 110 residues: UPF0060 membrane protein Bcep1808_1236 (110 aa).

Transmembrane regions (helical) follow at residues 9–29, 34–54, and 66–86; these read ALFA…WLVL, PVWL…LLTL, and YGGV…GVAL.

Belongs to the UPF0060 family.

The protein localises to the cell inner membrane. The polypeptide is UPF0060 membrane protein Bcep1808_1236 (Burkholderia vietnamiensis (strain G4 / LMG 22486) (Burkholderia cepacia (strain R1808))).